A 411-amino-acid polypeptide reads, in one-letter code: Pyruvate dehydrogenase E1 component subunit alpha, mitochondrial (411 aa).

A mitochondrion-targeting transit peptide spans 1-29 (MFSRAVRLSRAALPIRVASQRVPIAARRS). 10 residues coordinate pyruvate: histidine 111, tyrosine 137, arginine 138, glycine 184, valine 186, aspartate 215, glycine 216, alanine 217, asparagine 244, and tyrosine 246. Thiamine diphosphate contacts are provided by tyrosine 137, arginine 138, glycine 184, valine 186, aspartate 215, glycine 216, alanine 217, and asparagine 244. Aspartate 215 is a Mg(2+) binding site. Positions 244 and 246 each coordinate Mg(2+). Histidine 311 lines the thiamine diphosphate pocket.

Eukaryotic pyruvate dehydrogenase (PDH) complexes are organized as a core consisting of the oligomeric dihydrolipoamide acetyl-transferase (E2), around which are arranged multiple copies of pyruvate dehydrogenase (E1), dihydrolipoamide dehydrogenase (E3) and protein X (E3BP) bound by non-covalent bonds. The Chaetomium thermophilum PDH complex contains 60 E2 units, 12 E3BP units, about 20 E1 units, and 12 or more E3 units. The units are organized in 1 E2 60-mer, 4 E3BP trimers, about 20 E1 tetramers, and a maximum of 12 E3 dimers. Pyruvate dehydrogenase (E1) is active as a tetramer of 2 alpha and 2 beta subunits. The E3BP trimers are bound inside the icosahedral core with tetrahedral symmetry. It depends on thiamine diphosphate as a cofactor. The cofactor is Mg(2+).

It is found in the mitochondrion. The enzyme catalyses N(6)-[(R)-lipoyl]-L-lysyl-[protein] + pyruvate + H(+) = N(6)-[(R)-S(8)-acetyldihydrolipoyl]-L-lysyl-[protein] + CO2. Functionally, the 10-megadalton pyruvate dehydrogenase complex contains multiple copies of three enzymatic components: pyruvate dehydrogenase (E1), dihydrolipoamide acetyltransferase (E2) and lipoamide dehydrogenase (E3) and catalyzes the overall oxidative decarboxylation of pyruvate to form acetyl-CoA and CO(2). Within the complex, pyruvate and thiamine pyrophosphate (TPP or vitamin B1) are bound by pyruvate dehydrogenase E1 subunits alpha and beta and pyruvate is decarboxylated leading to the 2-carbon hydrohyethyl bound to TPP. The E2 component contains covalently-bound lipoyl cofactors and transfers the hydroxyethyl group from TPP to an oxidized form of covalently bound lipoamide, and the resulting acetyl group is then transferred to free coenzyme A to form acetyl-CoA and reduced dihydrolipoamide-E2. Finally, the flavoprotein dihydrolipoamide dehydrogenase (E3) re-oxidizes the lipoyl group of dihydrolipoamide-E2 to form lipoamide-E2 and NADH. A fourth subunit, E3BP, is responsible for tethering E3 in proximity to the core, forming the entire metabolon. This chain is Pyruvate dehydrogenase E1 component subunit alpha, mitochondrial, found in Chaetomium thermophilum (strain DSM 1495 / CBS 144.50 / IMI 039719) (Thermochaetoides thermophila).